A 122-amino-acid polypeptide reads, in one-letter code: Large ribosomal subunit protein uL14 (122 aa).

This sequence belongs to the universal ribosomal protein uL14 family. In terms of assembly, part of the 50S ribosomal subunit. Forms a cluster with proteins L3 and L19. In the 70S ribosome, L14 and L19 interact and together make contacts with the 16S rRNA in bridges B5 and B8.

Binds to 23S rRNA. Forms part of two intersubunit bridges in the 70S ribosome. In Alteromonas mediterranea (strain DSM 17117 / CIP 110805 / LMG 28347 / Deep ecotype), this protein is Large ribosomal subunit protein uL14.